A 275-amino-acid chain; its full sequence is MAIRKIGIASRCDRPEVLQMVRDIIAHFYSKVQIYVSTATADVLDIEGTPVERMRDKGVELIISVGGDGTVLRNIAKMKDPLPVLGINMGTLGFLVDVEPEDAIETIEEVLYGFSYLERMRVDVFLNGEMLETATNEVAVMSAKPAKIIQFEVYVNDCLLDEMRADGVVFATPTGSTAYAMSAGGPIINPRVNAIVVVPVAPFKLSARPWVIPSDSEITVKLSDHKKEAVIAIDGQKSYRIRPDDVVKLKKSKYPARFVRISDTCFYERVQRKLS.

The active-site Proton acceptor is D68. NAD(+)-binding positions include D68 to G69, R73, N136 to E137, K147, R164, D166, T177 to S182, A201, and Q236.

Belongs to the NAD kinase family. Requires a divalent metal cation as cofactor.

Its subcellular location is the cytoplasm. It catalyses the reaction NAD(+) + ATP = ADP + NADP(+) + H(+). Involved in the regulation of the intracellular balance of NAD and NADP, and is a key enzyme in the biosynthesis of NADP. Catalyzes specifically the phosphorylation on 2'-hydroxyl of the adenosine moiety of NAD to yield NADP. The protein is NAD kinase of Methanosarcina acetivorans (strain ATCC 35395 / DSM 2834 / JCM 12185 / C2A).